The sequence spans 2871 residues: Fibrillin-1 (2871 aa).

The N-terminal stretch at 1–24 is a signal peptide; that stretch reads MRRGRLLEVALGFTVLLASYTSHR. The propeptide occupies 25–44; it reads AEANLEAGNGKETRASRAKR. Residues 29-39 show a composition bias toward basic and acidic residues; sequence LEAGNGKETRA. The tract at residues 29-49 is disordered; that stretch reads LEAGNGKETRASRAKRRGGGG. A fibrillin unique N-terminal (FUN) domain region spans residues 45–81; the sequence is RGGGGHDALKGPNVCGSRYNAYCCPGWKTLPGGNQCI. Residues 45-450 are N-terminal domain; it reads RGGGGHDALK…PPRVLPVNVT (406 aa). 11 cysteine pairs are disulfide-bonded: Cys59/Cys68, Cys67/Cys80, Cys85/Cys94, Cys89/Cys100, Cys102/Cys111, Cys119/Cys129, Cys123/Cys134, Cys136/Cys145, Cys150/Cys160, Cys154/Cys166, and Cys168/Cys177. EGF-like domains are found at residues 81–112, 115–146, and 147–178; these read IVPICRHSCGDGFCSRPNMCTCPSGQIAPSCG, SIQHCNIRCMNGGSCSDDHCLCQKGYIGTHCG, and QPVCESGCLNGGRCVAPNRCACTYGFTGPQCE. Residues 119-329 are interaction with MFAP4; it reads CNIRCMNGGS…YTSPDGTRCI (211 aa). A TB 1 domain is found at 184 to 236; it reads GPCFTVVSNQMCQGQLSGIVCTKTLCCATVGRAWGHPCEMCPAQPHPCRRGFI. The interval 195-221 is hybrid domain 1; the sequence is CQGQLSGIVCTKTLCCATVGRAWGHPC. The 42-residue stretch at 246 to 287 folds into the EGF-like 4; calcium-binding domain; sequence DVDECQAIPGLCQGGNCINTVGSFECKCPAGHKFNEVSQKCE. 6 disulfide bridges follow: Cys250/Cys262, Cys257/Cys271, Cys273/Cys286, Cys292/Cys304, Cys299/Cys313, and Cys315/Cys328. O-linked (Glc) serine glycosylation occurs at Ser268. The EGF-like 5; calcium-binding domain maps to 288–329; it reads DIDECSTIPGICDGGECTNTVSSYFCKCPPGFYTSPDGTRCI. A TB 2 domain is found at 334 to 389; it reads GYCYTALTNGRCSNQLPQSITKMQCCCDVGRCWSPGVTVTPEMCPIRATEDFNKLC. N-linked (GlcNAc...) asparagine glycosylation occurs at Asn448. The EGF-like 6 domain maps to 449 to 489; that stretch reads VTDYCQLFRYLCHNGRCIPTPGSYRCECNKGFQLDLRGECI. 15 cysteine pairs are disulfide-bonded: Cys453/Cys465, Cys460/Cys474, Cys476/Cys488, Cys494/Cys504, Cys499/Cys513, Cys515/Cys528, Cys534/Cys546, Cys541/Cys555, Cys557/Cys570, Cys576/Cys587, Cys582/Cys596, Cys598/Cys611, Cys617/Cys628, Cys623/Cys637, and Cys639/Cys652. O-linked (Glc) serine glycosylation occurs at Ser471. Residues 490-529 enclose the EGF-like 7; calcium-binding domain; sequence DVDECEKNPCAGGECINNQGSYTCQCRPGYQSTLTRTECR. The O-linked (Glc) serine glycan is linked to Ser510. One can recognise an EGF-like 8; calcium-binding domain in the interval 530-571; that stretch reads DIDECLQNGRICNNGRCINTDGSFHCVCNAGFHVTRDGKNCE. The region spanning 572-612 is the EGF-like 9; calcium-binding domain; it reads DMDECSIRNMCLNGMCINEDGSFKCICKPGFQLASDGRYCK. One can recognise an EGF-like 10; calcium-binding domain in the interval 613-653; it reads DINECETSGICMNGRCVNTDGSYRCECFPGLAVGLDGRVCV. Residues 659–711 form the TB 3 domain; it reads STCYGGYKRGQCVKPLFGAVTKSECCCASTEYAFGEPCQPCPSQNSAEYQALC. Residues 723 to 764 enclose the EGF-like 11; calcium-binding domain; it reads DINECALDPDICPNGICENLRGTYKCICNSGYEVDSTGKNCV. 16 disulfides stabilise this stretch: Cys727/Cys739, Cys734/Cys748, Cys750/Cys763, Cys769/Cys781, Cys776/Cys790, Cys792/Cys805, Cys811/Cys821, Cys816/Cys830, Cys832/Cys845, Cys853/Cys875, Cys862/Cys887, Cys876/Cys890, Cys896/Cys908, Cys914/Cys926, Cys921/Cys935, and Cys937/Cys950. The region spanning 765 to 806 is the EGF-like 12; calcium-binding domain; that stretch reads DINECVLNSLLCDNGQCRNTPGSFVCTCPKGFIYKPDLKTCE. An EGF-like 13; calcium-binding domain is found at 807–846; that stretch reads DIDECESSPCINGVCKNSPGSFICECSSESTLDPTKTICI. One can recognise a TB 4 domain in the interval 851–902; it reads GTCWQTIIDGRCEININGATLKSQCCSSLGAAWGSPCTPCQVDPICGKGYSR. A hybrid domain 2 region spans residues 862-887; that stretch reads CEININGATLKSQCCSSLGAAWGSPC. Residues 910-951 enclose the EGF-like 14; calcium-binding domain; that stretch reads DIDECEVFPGVCKNGLCVNSKGSFKCQCPNGMTLDATGRICL. A TB 5 domain is found at 956–1008; the sequence is ETCFLRYEDEECTLPVVGRHRMDACCCSVGAAWGTEECEECPPRNTPEYEELC. One can recognise an EGF-like 15; calcium-binding domain in the interval 1028-1069; sequence DINECKMIPNLCTHGKCRNTIGSFKCRCDSGFALDSEERNCI. 43 disulfides stabilise this stretch: Cys1032–Cys1044, Cys1039–Cys1053, Cys1055–Cys1068, Cys1074–Cys1086, Cys1081–Cys1095, Cys1097–Cys1111, Cys1117–Cys1129, Cys1124–Cys1138, Cys1140–Cys1153, Cys1159–Cys1171, Cys1201–Cys1212, Cys1208–Cys1221, Cys1223–Cys1236, Cys1242–Cys1254, Cys1249–Cys1263, Cys1265–Cys1278, Cys1284–Cys1296, Cys1291–Cys1305, Cys1307–Cys1320, Cys1326–Cys1339, Cys1333–Cys1348, Cys1350–Cys1361, Cys1367–Cys1380, Cys1374–Cys1389, Cys1391–Cys1402, Cys1408–Cys1420, Cys1415–Cys1429, Cys1450–Cys1461, Cys1456–Cys1470, Cys1472–Cys1485, Cys1491–Cys1502, Cys1497–Cys1511, Cys1513–Cys1526, Cys1534–Cys1562, Cys1549–Cys1574, Cys1563–Cys1577, Cys1564–Cys1589, Cys1610–Cys1622, Cys1617–Cys1631, Cys1633–Cys1646, Cys1652–Cys1663, Cys1658–Cys1672, and Cys1674–Cys1687. The EGF-like 16; calcium-binding domain maps to 1070–1112; it reads DIDECRISPDLCGRGQCVNTPGDFECKCDEGYESGFMMMKNCM. An EGF-like 17; calcium-binding domain is found at 1113 to 1154; it reads DIDECQRDPLLCRGGVCLNTEGSYRCECPSGHQMSPNISACI. O-linked (Glc) serine glycosylation occurs at Ser1135. A glycan (N-linked (GlcNAc...) asparagine) is linked at Asn1149. In terms of domain architecture, EGF-like 18; calcium-binding spans 1155-1196; the sequence is DINECELSAHLCPHGRCVNLIGKYQRARNPGYHSTPDRLFCV. The 41-residue stretch at 1197–1237 folds into the EGF-like 19; calcium-binding domain; sequence DIDECSIMNGGCETFCTNSEGSYECSCQPGFALMPDQRSCT. The O-linked (Glc) serine glycan is linked to Ser1218. One can recognise an EGF-like 20; calcium-binding domain in the interval 1238-1279; that stretch reads DIDECEDNPNICDGGQCTNIPGEYRCLCYDGFMASEDMKTCV. The EGF-like 21; calcium-binding domain maps to 1280-1321; that stretch reads DVNECDLNPNICLSGTCENTKGSFICHCDMGYSGKKGKTGCT. O-linked (Glc) serine glycosylation is present at Ser1302. The EGF-like 22; calcium-binding domain occupies 1322–1362; that stretch reads DINECEIGAHNCDRHAVCTNTAGSFNCSCSPGWIGDGIKCT. A glycan (O-linked (Glc) serine) is linked at Ser1345. Residue Asn1347 is glycosylated (N-linked (GlcNAc...) asparagine). One can recognise an EGF-like 23; calcium-binding domain in the interval 1363 to 1403; it reads DLDECSNGTHMCSQHADCKNTMGSYRCLCKEGYTGDGFTCA. An N-linked (GlcNAc...) asparagine glycan is attached at Asn1369. Ser1386 carries O-linked (Glc) serine glycosylation. In terms of domain architecture, EGF-like 24; calcium-binding spans 1404 to 1445; it reads DLDECSENVKLCGNVQCLYAPGGYHCEYDMGFVPSADRKSCV. In terms of domain architecture, EGF-like 25; calcium-binding spans 1446 to 1486; it reads DSDECSLPNICVFGTCHNLPGLFRCECEIGYELDRSGGNCT. A glycan (N-linked (GlcNAc...) asparagine) is linked at Asn1484. An EGF-like 26; calcium-binding domain is found at 1487–1527; it reads DVNECLEPPTCISGNCVNTPGSYTCVCPPDFELNPTRVGCV. O-linked (Glc) serine glycosylation is present at Ser1508. Residues 1528–2731 form a C-terminal domain region; it reads DTRSGNCYLD…GYPKRGRKRR (1204 aa). The TB 6 domain occupies 1532-1589; that stretch reads GNCYLDVRPRGDNGDTACSNEIGVGVSKASCCCSLGKAWGTPCEQCPPVNTSEYKILC. The short motif at 1541–1543 is the Cell attachment site element; it reads RGD. The N-linked (GlcNAc...) asparagine glycan is linked to Asn1581. Residues 1606 to 1647 enclose the EGF-like 27; calcium-binding domain; it reads DIDECQELPGLCQGGKCINTFGSFQCRCPTGYYLNEDTRVCD. Ser1628 carries O-linked (Glc) serine glycosylation. Residues 1648-1688 form the EGF-like 28; calcium-binding domain; the sequence is DVNECETPGICGPGTCYNTVGNYTCICPPDYMQVNGGNNCM. A glycan (N-linked (GlcNAc...) asparagine) is linked at Asn1669. One can recognise a TB 7 domain in the interval 1693-1748; sequence SLCYRNYYADNQTCDGELLFNMTKKMCCCSYNIGRAWNKPCEQCPIPSTDEFATLC. 2 N-linked (GlcNAc...) asparagine glycosylation sites follow: Asn1703 and Asn1713. The EGF-like 29; calcium-binding domain occupies 1766–1807; that stretch reads DIDECREIPGVCENGVCINMVGSFRCECPVGFFYNDKLLVCE. 40 disulfides stabilise this stretch: Cys1770–Cys1782, Cys1777–Cys1791, Cys1793–Cys1806, Cys1812–Cys1824, Cys1818–Cys1833, Cys1835–Cys1847, Cys1853–Cys1865, Cys1860–Cys1874, Cys1876–Cys1889, Cys1895–Cys1905, Cys1900–Cys1914, Cys1916–Cys1928, Cys1934–Cys1947, Cys1942–Cys1956, Cys1958–Cys1971, Cys1977–Cys1989, Cys1984–Cys1998, Cys2000–Cys2011, Cys2017–Cys2029, Cys2024–Cys2038, Cys2040–Cys2053, Cys2061–Cys2083, Cys2070–Cys2096, Cys2084–Cys2099, Cys2085–Cys2111, Cys2131–Cys2142, Cys2137–Cys2151, Cys2153–Cys2164, Cys2170–Cys2181, Cys2176–Cys2190, Cys2192–Cys2204, Cys2210–Cys2221, Cys2217–Cys2230, Cys2232–Cys2245, Cys2251–Cys2265, Cys2258–Cys2274, Cys2276–Cys2289, Cys2295–Cys2307, Cys2302–Cys2316, and Cys2318–Cys2331. The EGF-like 30; calcium-binding domain occupies 1808 to 1848; the sequence is DIDECQNGPVCQRNAECINTAGSYRCDCKPGYRFTSTGQCN. Ser1830 carries O-linked (Glc) serine glycosylation. The region spanning 1849-1890 is the EGF-like 31; calcium-binding domain; the sequence is DRNECQEIPNICSHGQCIDTVGSFYCLCHTGFKTNADQTMCL. Residue Ser1871 is glycosylated (O-linked (Glc) serine). Positions 1891-1929 constitute an EGF-like 32; calcium-binding domain; it reads DINECERDACGNGTCRNTIGSFNCRCNHGFILSHNNDCI. Asn1902 is a glycosylation site (N-linked (GlcNAc...) asparagine). O-linked (Glc) serine glycosylation occurs at Ser1911. The region spanning 1930-1972 is the EGF-like 33; calcium-binding domain; sequence DVDECATGNGNLCRNGQCINTVGSFQCQCNEGYEVAPDGRTCV. Ser1953 carries an O-linked (Glc) serine glycan. Residues 1973 to 2012 form the EGF-like 34; calcium-binding domain; the sequence is DINECLLEPGKCAPGTCQNLDGSYRCICPPGYSLQNDKCE. An EGF-like 35; calcium-binding domain is found at 2013 to 2054; sequence DIDECVEEPEICALGTCSNTEGSFKCLCPDGFSLSSTGRRCQ. O-linked (Glc) serine glycosylation occurs at Ser2035. In terms of domain architecture, TB 8 spans 2059–2111; the sequence is SYCYAKFEGGKCSSPKSRNHSKQECCCALKGEGWGDPCELCPTEPDEAFRQIC. Asn2077 carries N-linked (GlcNAc...) asparagine glycosylation. Positions 2127–2165 constitute an EGF-like 36; calcium-binding domain; sequence DMDECKEPDVCKHGQCINTDGSYRCECPFGYILEGNECV. O-linked (Glc) serine glycosylation occurs at Ser2148. Positions 2166–2205 constitute an EGF-like 37; calcium-binding domain; it reads DTDECSVGNPCGNGTCKNVIGGFECTCEEGFEPGPMMTCE. Asn2178 carries N-linked (GlcNAc...) asparagine glycosylation. The EGF-like 38; calcium-binding domain occupies 2206–2246; it reads DINECAQNPLLCAFRCVNTYGSYECKCPTGYVLREDRRMCK. The O-linked (Glc) serine glycan is linked to Ser2227. The EGF-like 39; calcium-binding domain maps to 2247–2290; that stretch reads DEDECEEGKHDCAEKQMECKNLIGMYICICGPGYQRRPDGEGCV. The EGF-like 40; calcium-binding domain occupies 2291-2332; that stretch reads DENECQTKPGICENGRCLNTRGSYTCECNDGFTASPTQDECL. The O-linked (Glc) serine glycan is linked to Ser2313. The TB 9 domain occupies 2337-2390; that stretch reads GYCFTEVLQNMCQIGSSNRNPVTKSECCCDGGRGWGPHCEICPFQGTVAFKKLC. Residues 2402–2443 form the EGF-like 41; calcium-binding domain; it reads DIDECKVIHDVCRNGECINDRGSYHCICKTGYTPDITGTACV. 21 disulfides stabilise this stretch: Cys2406–Cys2418, Cys2413–Cys2427, Cys2429–Cys2442, Cys2448–Cys2459, Cys2455–Cys2468, Cys2470–Cys2483, Cys2489–Cys2500, Cys2496–Cys2509, Cys2511–Cys2522, Cys2528–Cys2541, Cys2535–Cys2550, Cys2552–Cys2565, Cys2571–Cys2581, Cys2577–Cys2590, Cys2592–Cys2605, Cys2611–Cys2622, Cys2617–Cys2631, Cys2633–Cys2646, Cys2652–Cys2663, Cys2659–Cys2672, and Cys2674–Cys2686. The EGF-like 42; calcium-binding domain maps to 2444-2484; it reads DLNECNQAPKPCNFICKNTEGSYQCSCPKGYILQEDGRSCK. The O-linked (Glc) serine glycan is linked to Ser2465. The EGF-like 43; calcium-binding domain maps to 2485–2523; it reads DLDECATKQHNCQFLCVNTIGSFACKCPPGFTQHHTACI. The 43-residue stretch at 2524 to 2566 folds into the EGF-like 44; calcium-binding domain; sequence DNNECTSDINLCGAKGICQNTPGSFTCECQRGFSLDQSGASCE. Ser2547 carries an O-linked (Glc) serine glycan. The region spanning 2567 to 2606 is the EGF-like 45; calcium-binding domain; the sequence is DVDECEGNHRCQHGCQNIIGGYRCSCPQGYLQHYQWNQCV. One can recognise an EGF-like 46; calcium-binding domain in the interval 2607-2647; the sequence is DENECLSAHICGGASCHNTLGSYKCMCPAGFQYEQFSGGCQ. Residue Ser2628 is glycosylated (O-linked (Glc) serine). The 40-residue stretch at 2648–2687 folds into the EGF-like 47; calcium-binding domain; that stretch reads DINECGSSQAPCSYGCSNTEGGYLCGCPPGYFRIGQGHCV. 2 positions are modified to phosphoserine: Ser2702 and Ser2709. N-linked (GlcNAc...) asparagine glycosylation is found at Asn2734, Asn2750, and Asn2767.

It belongs to the fibrillin family. As to quaternary structure, interacts with COL16A1. Interacts with integrin alpha-V/beta-3. Interacts with ADAMTS10; this interaction promotes microfibril assembly. Interacts with THSD4; this interaction promotes fibril formation. Interacts (via N-terminal domain) with FBLN2 and FBLN5. Interacts with ELN. Forms a ternary complex with ELN and FBLN2 or FBLN5 and a significant interaction with ELN seen only in the presence of FBLN2 or FBLN5. Interacts (via N-terminal domain) with LTBP2 (via C-terminal domain) in a Ca(+2)-dependent manner. Interacts (via N-terminal domain) with LTBP1 (via C-terminal domain). Interacts with integrins ITGA5:ITGB1, ITGAV:ITGB3 and ITGAV:ITGB6. Interacts (via N-terminal domain) with BMP2, BMP4, BMP7, BMP10 and GDF5. Interacts (via N-terminal domain) with MFAP2 and MFAP5. Interacts with ADAMTSL5. Interacts with MFAP4. Interacts (via N-terminal domain) with TNFSF11 in a Ca(+2)-dependent manner. Interacts (via N-terminal domain) with EFEMP2; this interaction inhibits EFEMP2 binding to LOX and ELN. Cleavage of N- and C-terminus by furin is required for incorporation into the extracellular matrix and assembly into microfibrils. The C-terminus, which corresponds to the Asprosin chain, was initially thought to constitute a propeptide. Fibrillin-1 and Asprosin chains are still linked together during the secretion from cells, but are subsequently separated by furin, an essential step for incorporation of Fibrillin-1 into the nascent microfibrils. Post-translationally, forms intermolecular disulfide bonds either with other fibrillin-1 molecules or with other components of the microfibrils. In terms of processing, O-glycosylated on serine residues by POGLUT2 and POGLUT3 which is necessary for efficient protein secretion.

It localises to the secreted. The protein localises to the extracellular space. Its subcellular location is the extracellular matrix. In terms of biological role, structural component of the 10-12 nm diameter microfibrils of the extracellular matrix, which conveys both structural and regulatory properties to load-bearing connective tissues. Fibrillin-1-containing microfibrils provide long-term force bearing structural support. In tissues such as the lung, blood vessels and skin, microfibrils form the periphery of the elastic fiber, acting as a scaffold for the deposition of elastin. In addition, microfibrils can occur as elastin-independent networks in tissues such as the ciliary zonule, tendon, cornea and glomerulus where they provide tensile strength and have anchoring roles. Fibrillin-1 also plays a key role in tissue homeostasis through specific interactions with growth factors, such as the bone morphogenetic proteins (BMPs), growth and differentiation factors (GDFs) and latent transforming growth factor-beta-binding proteins (LTBPs), cell-surface integrins and other extracellular matrix protein and proteoglycan components. Regulates osteoblast maturation by controlling TGF-beta bioavailability and calibrating TGF-beta and BMP levels, respectively. Negatively regulates osteoclastogenesis by binding and sequestering an osteoclast differentiation and activation factor TNFSF11. This leads to disruption of TNFSF11-induced Ca(2+) signaling and impairment of TNFSF11-mediated nuclear translocation and activation of transcription factor NFATC1 which regulates genes important for osteoclast differentiation and function. Mediates cell adhesion via its binding to cell surface receptors integrins ITGAV:ITGB3 and ITGA5:ITGB1. Binds heparin and this interaction plays an important role in the assembly of microfibrils. Its function is as follows. Hormone that targets the liver to increase plasma glucose levels. Secreted by white adipose tissue and circulates in the plasma. Acts in response to fasting and promotes blood glucose elevation by binding to the surface of hepatocytes. Promotes hepatocyte glucose release by activating the protein kinase A activity in the liver, resulting in rapid glucose release into the circulation. This chain is Fibrillin-1, found in Sus scrofa (Pig).